Here is a 501-residue protein sequence, read N- to C-terminus: ATP synthase subunit alpha, chloroplastic (501 aa).

170-177 lines the ATP pocket; the sequence is GDRQTGKT.

This sequence belongs to the ATPase alpha/beta chains family. F-type ATPases have 2 components, CF(1) - the catalytic core - and CF(0) - the membrane proton channel. CF(1) has five subunits: alpha(3), beta(3), gamma(1), delta(1), epsilon(1). CF(0) has four main subunits: a, b, b' and c.

It localises to the plastid. Its subcellular location is the chloroplast thylakoid membrane. It catalyses the reaction ATP + H2O + 4 H(+)(in) = ADP + phosphate + 5 H(+)(out). Its function is as follows. Produces ATP from ADP in the presence of a proton gradient across the membrane. The alpha chain is a regulatory subunit. The sequence is that of ATP synthase subunit alpha, chloroplastic from Nephroselmis olivacea (Green alga).